The sequence spans 407 residues: Probable tRNA sulfurtransferase (407 aa).

A THUMP domain is found at 61-165 (NEITYRLSKI…LDAIYMYEEV (105 aa)). ATP is bound by residues 183 to 184 (ML), 208 to 209 (HF), Arg265, Gly287, and Gln296.

This sequence belongs to the ThiI family.

The protein localises to the cytoplasm. It catalyses the reaction [ThiI sulfur-carrier protein]-S-sulfanyl-L-cysteine + a uridine in tRNA + 2 reduced [2Fe-2S]-[ferredoxin] + ATP + H(+) = [ThiI sulfur-carrier protein]-L-cysteine + a 4-thiouridine in tRNA + 2 oxidized [2Fe-2S]-[ferredoxin] + AMP + diphosphate. The catalysed reaction is [ThiS sulfur-carrier protein]-C-terminal Gly-Gly-AMP + S-sulfanyl-L-cysteinyl-[cysteine desulfurase] + AH2 = [ThiS sulfur-carrier protein]-C-terminal-Gly-aminoethanethioate + L-cysteinyl-[cysteine desulfurase] + A + AMP + 2 H(+). Its pathway is cofactor biosynthesis; thiamine diphosphate biosynthesis. In terms of biological role, catalyzes the ATP-dependent transfer of a sulfur to tRNA to produce 4-thiouridine in position 8 of tRNAs, which functions as a near-UV photosensor. Also catalyzes the transfer of sulfur to the sulfur carrier protein ThiS, forming ThiS-thiocarboxylate. This is a step in the synthesis of thiazole, in the thiamine biosynthesis pathway. The sulfur is donated as persulfide by IscS. In Staphylococcus aureus (strain bovine RF122 / ET3-1), this protein is Probable tRNA sulfurtransferase.